A 196-amino-acid polypeptide reads, in one-letter code: Holliday junction branch migration complex subunit RuvA (196 aa).

The segment at 1–63 (MYDYIKGTLV…DDAHLLFGFH (63 aa)) is domain I. The domain II stretch occupies residues 64 to 142 (TEDEKEVFLK…ELPAETTNTT (79 aa)). The tract at residues 143 to 146 (ANQT) is flexible linker. Residues 147–196 (AGNQQLDEAMEALLALGYKATELKKVKAFFEDTNETAEQYIKSALKMLMK) are domain III.

Belongs to the RuvA family. In terms of assembly, homotetramer. Forms an RuvA(8)-RuvB(12)-Holliday junction (HJ) complex. HJ DNA is sandwiched between 2 RuvA tetramers; dsDNA enters through RuvA and exits via RuvB. An RuvB hexamer assembles on each DNA strand where it exits the tetramer. Each RuvB hexamer is contacted by two RuvA subunits (via domain III) on 2 adjacent RuvB subunits; this complex drives branch migration. In the full resolvosome a probable DNA-RuvA(4)-RuvB(12)-RuvC(2) complex forms which resolves the HJ.

It localises to the cytoplasm. The RuvA-RuvB-RuvC complex processes Holliday junction (HJ) DNA during genetic recombination and DNA repair, while the RuvA-RuvB complex plays an important role in the rescue of blocked DNA replication forks via replication fork reversal (RFR). RuvA specifically binds to HJ cruciform DNA, conferring on it an open structure. The RuvB hexamer acts as an ATP-dependent pump, pulling dsDNA into and through the RuvAB complex. HJ branch migration allows RuvC to scan DNA until it finds its consensus sequence, where it cleaves and resolves the cruciform DNA. The protein is Holliday junction branch migration complex subunit RuvA of Streptococcus thermophilus (strain ATCC BAA-491 / LMD-9).